The primary structure comprises 343 residues: Dihydroorotate dehydrogenase (quinone) (343 aa).

FMN contacts are provided by residues 61–65 (AGLDK) and threonine 85. A substrate-binding site is contributed by lysine 65. 110–114 (NRMGF) is a binding site for substrate. FMN contacts are provided by asparagine 138 and asparagine 171. Residue asparagine 171 coordinates substrate. The Nucleophile role is filled by serine 174. Substrate is bound at residue asparagine 176. FMN-binding residues include lysine 216 and threonine 244. 245 to 246 (NT) is a substrate binding site. FMN contacts are provided by residues glycine 267, glycine 296, and 317 to 318 (YS).

Belongs to the dihydroorotate dehydrogenase family. Type 2 subfamily. As to quaternary structure, monomer. FMN serves as cofactor.

Its subcellular location is the cell membrane. It carries out the reaction (S)-dihydroorotate + a quinone = orotate + a quinol. It functions in the pathway pyrimidine metabolism; UMP biosynthesis via de novo pathway; orotate from (S)-dihydroorotate (quinone route): step 1/1. Catalyzes the conversion of dihydroorotate to orotate with quinone as electron acceptor. This Pseudomonas syringae pv. tomato (strain ATCC BAA-871 / DC3000) protein is Dihydroorotate dehydrogenase (quinone).